A 196-amino-acid polypeptide reads, in one-letter code: uncharacterized protein (196 aa).

The span at 1–10 (MPGMVPPHVP) shows a compositional bias: pro residues. 2 disordered regions span residues 1-118 (MPGM…EGSG) and 176-196 (TEQA…SAPG). Residues 25 to 45 (PVAPQVPSPGGAPGQGPYPYS) are compositionally biased toward low complexity. Residues 54–69 (LDTSGKNLTEQNSYSN) are compositionally biased toward polar residues.

This is an uncharacterized protein from Homo sapiens (Human).